The sequence spans 472 residues: Ribulose bisphosphate carboxylase large chain 1 (472 aa).

Substrate-binding residues include N115 and T165. K167 serves as the catalytic Proton acceptor. K169 provides a ligand contact to substrate. 3 residues coordinate Mg(2+): K193, D195, and E196. K193 is subject to N6-carboxylysine. The active-site Proton acceptor is the H286. 3 residues coordinate substrate: R287, H319, and S371.

It belongs to the RuBisCO large chain family. Type I subfamily. In terms of assembly, heterohexadecamer of 8 large chains and 8 small chains. Requires Mg(2+) as cofactor.

The catalysed reaction is 2 (2R)-3-phosphoglycerate + 2 H(+) = D-ribulose 1,5-bisphosphate + CO2 + H2O. It catalyses the reaction D-ribulose 1,5-bisphosphate + O2 = 2-phosphoglycolate + (2R)-3-phosphoglycerate + 2 H(+). Functionally, ruBisCO catalyzes two reactions: the carboxylation of D-ribulose 1,5-bisphosphate, the primary event in carbon dioxide fixation, as well as the oxidative fragmentation of the pentose substrate. Both reactions occur simultaneously and in competition at the same active site. In Rhodopseudomonas palustris (strain BisB5), this protein is Ribulose bisphosphate carboxylase large chain 1.